The following is a 96-amino-acid chain: Small ribosomal subunit protein bS20 (96 aa).

A disordered region spans residues 1 to 27 (MAKQEVAAKKVKRPTALKRDLQNKKKR).

Belongs to the bacterial ribosomal protein bS20 family.

Its function is as follows. Binds directly to 16S ribosomal RNA. This chain is Small ribosomal subunit protein bS20, found in Protochlamydia amoebophila (strain UWE25).